Reading from the N-terminus, the 119-residue chain is Divalent-cation tolerance protein CutA (119 aa).

Residues cysteine 23, histidine 90, and histidine 91 each contribute to the Cu cation site.

It belongs to the CutA family. In terms of assembly, homotrimer. It depends on Cu cation as a cofactor.

The protein resides in the cytoplasm. In terms of biological role, involved in resistance toward heavy metals. In Yersinia pseudotuberculosis serotype O:1b (strain IP 31758), this protein is Divalent-cation tolerance protein CutA.